The chain runs to 252 residues: Oil body-associated protein 2A (252 aa).

A disordered region spans residues 1-31; it reads MASSDGKPLPTPASVGGGGGSSTAPPGQPTT. Residues 22 to 31 show a composition bias toward low complexity; the sequence is STAPPGQPTT.

Belongs to the OBAP family.

In Zea mays (Maize), this protein is Oil body-associated protein 2A.